A 145-amino-acid polypeptide reads, in one-letter code: D-aminoacyl-tRNA deacylase (145 aa).

Positions 137 to 138 (GP) match the Gly-cisPro motif, important for rejection of L-amino acids motif.

It belongs to the DTD family. In terms of assembly, homodimer.

The protein localises to the cytoplasm. The catalysed reaction is glycyl-tRNA(Ala) + H2O = tRNA(Ala) + glycine + H(+). It catalyses the reaction a D-aminoacyl-tRNA + H2O = a tRNA + a D-alpha-amino acid + H(+). Its function is as follows. An aminoacyl-tRNA editing enzyme that deacylates mischarged D-aminoacyl-tRNAs. Also deacylates mischarged glycyl-tRNA(Ala), protecting cells against glycine mischarging by AlaRS. Acts via tRNA-based rather than protein-based catalysis; rejects L-amino acids rather than detecting D-amino acids in the active site. By recycling D-aminoacyl-tRNA to D-amino acids and free tRNA molecules, this enzyme counteracts the toxicity associated with the formation of D-aminoacyl-tRNA entities in vivo and helps enforce protein L-homochirality. This chain is D-aminoacyl-tRNA deacylase, found in Stutzerimonas stutzeri (strain A1501) (Pseudomonas stutzeri).